A 156-amino-acid chain; its full sequence is Small ribosomal subunit protein uS7c (156 aa).

The protein belongs to the universal ribosomal protein uS7 family. Part of the 30S ribosomal subunit.

It is found in the plastid. It localises to the chloroplast. In terms of biological role, one of the primary rRNA binding proteins, it binds directly to 16S rRNA where it nucleates assembly of the head domain of the 30S subunit. The polypeptide is Small ribosomal subunit protein uS7c (rps7) (Porphyra purpurea (Red seaweed)).